Here is a 65-residue protein sequence, read N- to C-terminus: Large ribosomal subunit protein bL35 (65 aa).

It belongs to the bacterial ribosomal protein bL35 family.

This Alkalilimnicola ehrlichii (strain ATCC BAA-1101 / DSM 17681 / MLHE-1) protein is Large ribosomal subunit protein bL35.